We begin with the raw amino-acid sequence, 221 residues long: UPF0502 protein XOO0224 (221 aa).

This sequence belongs to the UPF0502 family.

In Xanthomonas oryzae pv. oryzae (strain MAFF 311018), this protein is UPF0502 protein XOO0224.